We begin with the raw amino-acid sequence, 310 residues long: 26S proteasome non-ATPase regulatory subunit 7 homolog B (310 aa).

Met-1 carries the post-translational modification N-acetylmethionine. The MPN domain occupies 17-154 (VIVHPLVLLS…YYAVEEVKEN (138 aa)).

It belongs to the peptidase M67A family. In terms of assembly, component of the 19S regulatory particle (RP/PA700) lid subcomplex of the 26S proteasome. The 26S proteasome is composed of a core protease (CP), known as the 20S proteasome, capped at one or both ends by the 19S regulatory particle (RP/PA700). The RP/PA700 complex is composed of at least 17 different subunits in two subcomplexes, the base and the lid, which form the portions proximal and distal to the 20S proteolytic core, respectively.

Acts as a regulatory subunit of the 26S proteasome which is involved in the ATP-dependent degradation of ubiquitinated proteins. This chain is 26S proteasome non-ATPase regulatory subunit 7 homolog B (RPN8B), found in Arabidopsis thaliana (Mouse-ear cress).